We begin with the raw amino-acid sequence, 93 residues long: UPF0358 protein BH2626 (93 aa).

Belongs to the UPF0358 family.

In Halalkalibacterium halodurans (strain ATCC BAA-125 / DSM 18197 / FERM 7344 / JCM 9153 / C-125) (Bacillus halodurans), this protein is UPF0358 protein BH2626.